The sequence spans 918 residues: Cap-specific mRNA (nucleoside-2'-O-)-methyltransferase 1 (918 aa).

Over residues 1 to 18 the composition is skewed to basic and acidic residues; the sequence is MADRKSDEGEDEYQHKEQ. Disordered regions lie at residues 1–56 and 62–81; these read MADR…EERA and KRGY…EEEP. Over residues 19-30 the composition is skewed to polar residues; the sequence is MVTNRTSSFQPK. Basic and acidic residues predominate over residues 43–56; that stretch reads RAADRREEFMEERA. Over residues 68–80 the composition is skewed to acidic residues; that stretch reads GDDEEDDFTAEEE. Positions 86 to 132 constitute a G-patch domain; the sequence is PLTVAERLMAAMGHKAGEGLGKHGQGISEPIASSTQRGRTGLGHNAG. In terms of domain architecture, RrmJ-type SAM-dependent 2'-O-MTase spans 236–465; sequence FFQNRAAMKT…ERYITCKGLR (230 aa). Positions 298 and 379 each coordinate S-adenosyl-L-methionine. Lys419 acts as the Proton acceptor in catalysis.

The catalysed reaction is a 5'-end (N(7)-methyl 5'-triphosphoguanosine)-ribonucleoside in mRNA + S-adenosyl-L-methionine = a 5'-end (N(7)-methyl 5'-triphosphoguanosine)-(2'-O-methyl-ribonucleoside) in mRNA + S-adenosyl-L-homocysteine + H(+). S-adenosyl-L-methionine-dependent methyltransferase that mediates mRNA cap1 2'-O-ribose methylation to the 5'-cap structure of mRNAs. Methylates the ribose of the first nucleotide of a m(7)GpppG-capped mRNA to produce m(7)GpppNmp (cap1). Cap1 modification is linked to higher levels of translation. In Caenorhabditis elegans, this protein is Cap-specific mRNA (nucleoside-2'-O-)-methyltransferase 1.